The chain runs to 132 residues: Small ribosomal subunit protein uS8 (132 aa).

This sequence belongs to the universal ribosomal protein uS8 family. In terms of assembly, part of the 30S ribosomal subunit. Contacts proteins S5 and S12.

Functionally, one of the primary rRNA binding proteins, it binds directly to 16S rRNA central domain where it helps coordinate assembly of the platform of the 30S subunit. The polypeptide is Small ribosomal subunit protein uS8 (Rhizobium rhizogenes (strain K84 / ATCC BAA-868) (Agrobacterium radiobacter)).